A 247-amino-acid polypeptide reads, in one-letter code: Geranylgeranylglyceryl phosphate synthase (247 aa).

The Mg(2+) site is built by D23 and S52. Residues 171–177 (YLEAGSG), 203–204 (GG), and 225–226 (GT) contribute to the sn-glycerol 1-phosphate site.

It belongs to the GGGP/HepGP synthase family. Group II subfamily. The cofactor is Mg(2+).

It is found in the cytoplasm. The catalysed reaction is sn-glycerol 1-phosphate + (2E,6E,10E)-geranylgeranyl diphosphate = sn-3-O-(geranylgeranyl)glycerol 1-phosphate + diphosphate. It functions in the pathway membrane lipid metabolism; glycerophospholipid metabolism. In terms of biological role, prenyltransferase that catalyzes the transfer of the geranylgeranyl moiety of geranylgeranyl diphosphate (GGPP) to the C3 hydroxyl of sn-glycerol-1-phosphate (G1P). This reaction is the first ether-bond-formation step in the biosynthesis of archaeal membrane lipids. The protein is Geranylgeranylglyceryl phosphate synthase of Methanosarcina barkeri (strain Fusaro / DSM 804).